Here is an 843-residue protein sequence, read N- to C-terminus: Probable disease resistance protein At5g47250 (843 aa).

Residues 28-58 (MLKENLVLLKSAFDELKAEKEDVVNRVNAGE) adopt a coiled-coil conformation. In terms of domain architecture, NB-ARC spans 141-440 (TEQPPPPVVE…GEGFIDEKDG (300 aa)). 183–190 (GMGGVGKT) is an ATP binding site. LRR repeat units lie at residues 510–531 (TVTK…PEFP), 535–556 (NLVT…FFLV), 559–581 (TLVV…ISAL), 583–604 (SLRL…LGVL), and 606–628 (KLIH…SELQ).

It belongs to the disease resistance NB-LRR family.

Functionally, probable disease resistance protein. In Arabidopsis thaliana (Mouse-ear cress), this protein is Probable disease resistance protein At5g47250.